Here is a 473-residue protein sequence, read N- to C-terminus: Reticulon-4 receptor (473 aa).

A signal peptide spans 1–26 (MKRASSGGSRLLAWVLWLQAWRVATP). 2 disulfide bridges follow: C27–C33 and C31–C43. Residues 27-57 (CPGACVCYNEPKVTTSCPQQGLQAVPTGIPA) enclose the LRRNT domain. 9 LRR repeats span residues 56 to 79 (PASS…SFQS), 80 to 103 (CRNL…AFTG), 105 to 128 (TLLE…TFRG), 129 to 152 (LGHL…LFRG), 153 to 176 (LAAL…TFRD), 178 to 200 (GNLT…AFRG), 202 to 224 (HSLD…AFRD), 225 to 248 (LGRL…VLVP), and 250 to 273 (RSLQ…PLWA). N82 carries N-linked (GlcNAc...) asparagine glycosylation. Residues 260–310 (NPWVCDCRARPLWAWLQKFRGSSSEVPCNLPQRLAGRDLKRLAASDLEGCA) enclose the LRRCT domain. 3 disulfides stabilise this stretch: C264-C287, C266-C335, and C309-C336. Positions 346–446 (VLEPGRPASA…GSSGTGDAEG (101 aa)) are disordered. N372 carries N-linked (GlcNAc...) asparagine glycosylation. Residues 413–429 (PRRRPGCSRKNRTRSHC) show a composition bias toward basic residues. A compositionally biased stretch (gly residues) spans 434–445 (AGSGSSGTGDAE). S447 carries the GPI-anchor amidated serine lipid modification. Residues 448–473 (GALPALACSLAPLGLALVLWTVLGPC) constitute a propeptide, removed in mature form.

Belongs to the Nogo receptor family. Homodimer. Interacts with MAG. Interacts with RTN4 and OMG. Interacts with LINGO1 and NGFR. Interacts with KIAA0319L. Interacts with OLFM1; this inhibits interaction with LINGO1 and NGFR. In terms of processing, N-glycosylated. O-glycosylated. Contains terminal sialic acid groups on its glycan chains. In terms of tissue distribution, detected in embryonic cerebellum, in spinal cord motor neurons and in dorsal root ganglia. Detected in adult brain, in neocortex, hippocampus, striatum, thalamus and dorsal root ganglion neurons (at protein level).

Its subcellular location is the cell membrane. The protein resides in the membrane raft. The protein localises to the cell projection. It is found in the dendrite. It localises to the perikaryon. Its subcellular location is the axon. In terms of biological role, receptor for RTN4, OMG and MAG. Functions as a receptor for the sialylated gangliosides GT1b and GM1. Besides, functions as a receptor for chondroitin sulfate proteoglycans. Can also bind heparin. Intracellular signaling cascades are triggered via the coreceptor NGFR. Signaling mediates activation of Rho and downstream reorganization of the actin cytoskeleton. Mediates axonal growth inhibition. May play a role in regulating axon regeneration and neuronal plasticity in the adult central nervous system. Plays a role in postnatal brain development. Required for normal axon migration across the brain midline and normal formation of the corpus callosum. Protects motoneurons against apoptosis; protection against apoptosis is probably mediated via interaction with MAG. Acts in conjunction with RTN4 and LINGO1 in regulating neuronal precursor cell motility during cortical development. Like other family members, plays a role in restricting the number dendritic spines and the number of synapses that are formed during brain development. The protein is Reticulon-4 receptor (Rtn4r) of Rattus norvegicus (Rat).